The primary structure comprises 486 residues: Catalase (486 aa).

The segment at 1–28 is disordered; it reads MENKKLTAANGRPIADNQNSQTAGPRGP. Residues His-54 and Asn-127 contribute to the active site. Tyr-337 provides a ligand contact to heme.

Belongs to the catalase family. As to quaternary structure, homodimer. The cofactor is heme.

It carries out the reaction 2 H2O2 = O2 + 2 H2O. Its function is as follows. Decomposes hydrogen peroxide into water and oxygen; serves to protect cells from the toxic effects of hydrogen peroxide. May be involved in aerotolerance of B.fragilis. The sequence is that of Catalase (katA) from Bacteroides fragilis (strain YCH46).